An 88-amino-acid polypeptide reads, in one-letter code: MKKVLVKAVHGYQRWISPALPPACRYYPTCSNYMVQAIEKHGPAKGLAMGTARILRCHPFCQPGYDLVPDHFSLRRNWAEPEKEEDSN.

The protein belongs to the UPF0161 family.

Its subcellular location is the cell membrane. In terms of biological role, could be involved in insertion of integral membrane proteins into the membrane. The chain is Putative membrane protein insertion efficiency factor (yrcB) from Lactococcus lactis subsp. lactis (strain IL1403) (Streptococcus lactis).